The chain runs to 94 residues: Pyrimidine/purine nucleoside phosphorylase (94 aa).

The protein belongs to the nucleoside phosphorylase PpnP family.

The enzyme catalyses a purine D-ribonucleoside + phosphate = a purine nucleobase + alpha-D-ribose 1-phosphate. It catalyses the reaction adenosine + phosphate = alpha-D-ribose 1-phosphate + adenine. It carries out the reaction cytidine + phosphate = cytosine + alpha-D-ribose 1-phosphate. The catalysed reaction is guanosine + phosphate = alpha-D-ribose 1-phosphate + guanine. The enzyme catalyses inosine + phosphate = alpha-D-ribose 1-phosphate + hypoxanthine. It catalyses the reaction thymidine + phosphate = 2-deoxy-alpha-D-ribose 1-phosphate + thymine. It carries out the reaction uridine + phosphate = alpha-D-ribose 1-phosphate + uracil. The catalysed reaction is xanthosine + phosphate = alpha-D-ribose 1-phosphate + xanthine. Functionally, catalyzes the phosphorolysis of diverse nucleosides, yielding D-ribose 1-phosphate and the respective free bases. Can use uridine, adenosine, guanosine, cytidine, thymidine, inosine and xanthosine as substrates. Also catalyzes the reverse reactions. In Pseudomonas putida (strain ATCC 700007 / DSM 6899 / JCM 31910 / BCRC 17059 / LMG 24140 / F1), this protein is Pyrimidine/purine nucleoside phosphorylase.